A 321-amino-acid polypeptide reads, in one-letter code: Cathepsin O (321 aa).

An N-terminal signal peptide occupies residues Met1 to Ala23. Residues Asp24 to Ser107 constitute a propeptide, activation peptide. Asn62 and Asn105 each carry an N-linked (GlcNAc...) asparagine glycan. 3 cysteine pairs are disulfide-bonded: Cys129–Cys170, Cys163–Cys204, and Cys262–Cys310. Cys132 is a catalytic residue. Active-site residues include His269 and Asn289.

It belongs to the peptidase C1 family. As to expression, expressed in all tissues examined. High levels seen in the ovary, kidney and placenta while low levels seen in thymus and skeletal muscle.

The protein localises to the lysosome. It carries out the reaction The recombinant human enzyme hydrolyzes synthetic endopeptidase substrates including Z-Phe-Arg-NHMec and Z-Arg-Arg-NHMec.. Proteolytic enzyme possibly involved in normal cellular protein degradation and turnover. The sequence is that of Cathepsin O (CTSO) from Homo sapiens (Human).